The chain runs to 186 residues: TATA-box-binding protein E (186 aa).

2 consecutive repeat copies span residues 10-86 and 101-179.

The protein belongs to the TBP family.

Functionally, general factor that plays a role in the activation of archaeal genes transcribed by RNA polymerase. Binds specifically to the TATA box promoter element which lies close to the position of transcription initiation. The polypeptide is TATA-box-binding protein E (tbpE) (Halobacterium salinarum (strain ATCC 700922 / JCM 11081 / NRC-1) (Halobacterium halobium)).